The following is a 380-amino-acid chain: L-prolyl-[peptidyl-carrier protein] dehydrogenase (380 aa).

E243 functions as the Proton acceptor in the catalytic mechanism. FAD-binding residues include R269 and Q280.

This sequence belongs to the acyl-CoA dehydrogenase family. It depends on FAD as a cofactor.

The catalysed reaction is L-prolyl-[peptidyl-carrier protein] + 2 oxidized [electron-transfer flavoprotein] + H(+) = (1H-pyrrole-2-carbonyl)-[peptidyl-carrier protein] + 2 reduced [electron-transfer flavoprotein]. Functionally, involved in the biosynthesis of pyoluteorin. Catalyzes the desaturation of the L-prolyl-[PltL] to yield 1H-pyrrole-2-carbonyl-[PltL]. The sequence is that of L-prolyl-[peptidyl-carrier protein] dehydrogenase from Pseudomonas fluorescens (strain ATCC BAA-477 / NRRL B-23932 / Pf-5).